Here is an 874-residue protein sequence, read N- to C-terminus: Protein translocase subunit SecA (874 aa).

ATP contacts are provided by residues Gln-85, 103–107 (GEGKT), and Asp-492. Residues 839–854 (EEGPKKPYRREQKIGR) show a composition bias toward basic and acidic residues. The disordered stretch occupies residues 839–864 (EEGPKKPYRREQKIGRNDPCPCGSGK). The Zn(2+) site is built by Cys-858, Cys-860, Cys-869, and Cys-870.

Belongs to the SecA family. In terms of assembly, monomer and homodimer. Part of the essential Sec protein translocation apparatus which comprises SecA, SecYEG and auxiliary proteins SecDF. Other proteins may also be involved. Zn(2+) serves as cofactor.

Its subcellular location is the cell membrane. It localises to the cytoplasm. It carries out the reaction ATP + H2O + cellular proteinSide 1 = ADP + phosphate + cellular proteinSide 2.. Part of the Sec protein translocase complex. Interacts with the SecYEG preprotein conducting channel. Has a central role in coupling the hydrolysis of ATP to the transfer of proteins into and across the cell membrane, serving as an ATP-driven molecular motor driving the stepwise translocation of polypeptide chains across the membrane. This chain is Protein translocase subunit SecA, found in Carboxydothermus hydrogenoformans (strain ATCC BAA-161 / DSM 6008 / Z-2901).